A 202-amino-acid polypeptide reads, in one-letter code: dTTP/UTP pyrophosphatase (202 aa).

Catalysis depends on Asp-76, which acts as the Proton acceptor.

The protein belongs to the Maf family. YhdE subfamily. A divalent metal cation is required as a cofactor.

It localises to the cytoplasm. The catalysed reaction is dTTP + H2O = dTMP + diphosphate + H(+). It carries out the reaction UTP + H2O = UMP + diphosphate + H(+). Functionally, nucleoside triphosphate pyrophosphatase that hydrolyzes dTTP and UTP. May have a dual role in cell division arrest and in preventing the incorporation of modified nucleotides into cellular nucleic acids. In Neisseria meningitidis serogroup B (strain ATCC BAA-335 / MC58), this protein is dTTP/UTP pyrophosphatase.